Reading from the N-terminus, the 491-residue chain is Ketol-acid reductoisomerase (NADP(+)) (491 aa).

Residues 15 to 208 (AQLGKCRFMG…GGHRAGVLES (194 aa)) enclose the KARI N-terminal Rossmann domain. Residues 45 to 48 (CGAQ), R68, R76, S78, and 108 to 110 (DKQ) each bind NADP(+). H132 is an active-site residue. G158 is a binding site for NADP(+). 2 KARI C-terminal knotted domains span residues 209 to 344 (SFVA…TAPQ) and 345 to 484 (YEGK…MTDM). 4 residues coordinate Mg(2+): D217, E221, E389, and E393. A substrate-binding site is contributed by S414.

Belongs to the ketol-acid reductoisomerase family. Mg(2+) serves as cofactor.

It carries out the reaction (2R)-2,3-dihydroxy-3-methylbutanoate + NADP(+) = (2S)-2-acetolactate + NADPH + H(+). The enzyme catalyses (2R,3R)-2,3-dihydroxy-3-methylpentanoate + NADP(+) = (S)-2-ethyl-2-hydroxy-3-oxobutanoate + NADPH + H(+). The protein operates within amino-acid biosynthesis; L-isoleucine biosynthesis; L-isoleucine from 2-oxobutanoate: step 2/4. It functions in the pathway amino-acid biosynthesis; L-valine biosynthesis; L-valine from pyruvate: step 2/4. In terms of biological role, involved in the biosynthesis of branched-chain amino acids (BCAA). Catalyzes an alkyl-migration followed by a ketol-acid reduction of (S)-2-acetolactate (S2AL) to yield (R)-2,3-dihydroxy-isovalerate. In the isomerase reaction, S2AL is rearranged via a Mg-dependent methyl migration to produce 3-hydroxy-3-methyl-2-ketobutyrate (HMKB). In the reductase reaction, this 2-ketoacid undergoes a metal-dependent reduction by NADPH to yield (R)-2,3-dihydroxy-isovalerate. This chain is Ketol-acid reductoisomerase (NADP(+)), found in Citrobacter koseri (strain ATCC BAA-895 / CDC 4225-83 / SGSC4696).